A 452-amino-acid chain; its full sequence is Tubulin alpha-1 chain (452 aa).

Gln-11 serves as a coordination point for GTP. Residue Lys-40 is modified to N6-acetyllysine. The GTP site is built by Glu-71, Gly-144, Thr-145, Thr-179, Asn-206, and Asn-228. Position 71 (Glu-71) interacts with Mg(2+). Residue Glu-254 is part of the active site. The tract at residues 430–452 (KDYEEVGAESGDGDDDGLGEEEY) is disordered. Over residues 431 to 452 (DYEEVGAESGDGDDDGLGEEEY) the composition is skewed to acidic residues.

It belongs to the tubulin family. As to quaternary structure, dimer of alpha and beta chains. A typical microtubule is a hollow water-filled tube with an outer diameter of 25 nm and an inner diameter of 15 nM. Alpha-beta heterodimers associate head-to-tail to form protofilaments running lengthwise along the microtubule wall with the beta-tubulin subunit facing the microtubule plus end conferring a structural polarity. Microtubules usually have 13 protofilaments but different protofilament numbers can be found in some organisms and specialized cells. Mg(2+) is required as a cofactor. In terms of processing, undergoes a tyrosination/detyrosination cycle, the cyclic removal and re-addition of a C-terminal tyrosine residue by the enzymes tubulin tyrosine carboxypeptidase (TTCP) and tubulin tyrosine ligase (TTL), respectively. Acetylation of alpha chains at Lys-40 stabilizes microtubules and affects affinity and processivity of microtubule motors. This modification has a role in multiple cellular functions, ranging from cell motility, cell cycle progression or cell differentiation to intracellular trafficking and signaling.

The protein localises to the cytoplasm. The protein resides in the cytoskeleton. The enzyme catalyses GTP + H2O = GDP + phosphate + H(+). In terms of biological role, tubulin is the major constituent of microtubules, a cylinder consisting of laterally associated linear protofilaments composed of alpha- and beta-tubulin heterodimers. Microtubules grow by the addition of GTP-tubulin dimers to the microtubule end, where a stabilizing cap forms. Below the cap, tubulin dimers are in GDP-bound state, owing to GTPase activity of alpha-tubulin. This Pisum sativum (Garden pea) protein is Tubulin alpha-1 chain (TUBA1).